A 347-amino-acid polypeptide reads, in one-letter code: Autoinducer 2 import system permease protein LsrC (347 aa).

9 consecutive transmembrane segments (helical) span residues 14-34, 39-59, 72-92, 93-113, 115-135, 155-175, 213-233, 249-269, and 284-304; these read LLAI…YLSV, MVFS…MVML, GMCA…PVAC, LATL…VAWL, IPAI…MLLW, VFLG…LMAW, LNGG…GFIP, VLGG…ILGA, and IPAW…LVFD.

This sequence belongs to the binding-protein-dependent transport system permease family. AraH/RbsC subfamily. As to quaternary structure, the complex is composed of two ATP-binding proteins (LsrA), two transmembrane proteins (LsrC and LsrD) and a solute-binding protein (LsrB).

The protein localises to the cell inner membrane. Part of the ABC transporter complex LsrABCD involved in autoinducer 2 (AI-2) import. Probably responsible for the translocation of the substrate across the membrane. This is Autoinducer 2 import system permease protein LsrC (lsrC) from Salmonella paratyphi A (strain ATCC 9150 / SARB42).